Consider the following 123-residue polypeptide: Small ribosomal subunit protein uS12 (123 aa).

Residue D89 is modified to 3-methylthioaspartic acid.

The protein belongs to the universal ribosomal protein uS12 family. Part of the 30S ribosomal subunit. Contacts proteins S8 and S17. May interact with IF1 in the 30S initiation complex.

Functionally, with S4 and S5 plays an important role in translational accuracy. Its function is as follows. Interacts with and stabilizes bases of the 16S rRNA that are involved in tRNA selection in the A site and with the mRNA backbone. Located at the interface of the 30S and 50S subunits, it traverses the body of the 30S subunit contacting proteins on the other side and probably holding the rRNA structure together. The combined cluster of proteins S8, S12 and S17 appears to hold together the shoulder and platform of the 30S subunit. The sequence is that of Small ribosomal subunit protein uS12 from Rhodopseudomonas palustris (strain HaA2).